The sequence spans 1872 residues: Histone acetyltransferase KAT6B (1872 aa).

Residues 1-77 (MVKLANPLYT…LASYKDPDNP (77 aa)) enclose the SAMD1-like winged helix (WH) domain. 2 disordered regions span residues 70–103 (SYKDPDNPGRFSSVKPGTFPKPTKGSKGPPCNDL) and 168–207 (KEGPQYRVNSGSSDGKGAPQYPSAFPSSLPPVSLLPHEKD). The H15 domain maps to 104-177 (RNVDWNKLLK…KEGPQYRVNS (74 aa)). The span at 189–202 (PSAFPSSLPPVSLL) shows a compositional bias: low complexity. PHD-type zinc fingers lie at residues 214–273 (IPIC…CKTC) and 270–321 (CKTC…CRPK). Residue serine 356 is modified to Phosphoserine. The interval 361 to 417 (EGSMSAFTGRGSPGRGQKTKVSTTPSSGHAASGKHSSSRLAVTDPTRPGATTKTTTS) is disordered. The segment at 362 to 535 (GSMSAFTGRG…ECESGVEDCG (174 aa)) is negatively regulates HAT activity. Over residues 386-395 (SSGHAASGKH) the composition is skewed to low complexity. Lysine 491 participates in a covalent cross-link: Glycyl lysine isopeptide (Lys-Gly) (interchain with G-Cter in SUMO2). The 275-residue stretch at 533–807 (DCGRYPSVIE…LDPESLRWTP (275 aa)) folds into the MYST-type HAT domain. The interval 536–826 (RYPSVIEFGK…EEEREAEKEA (291 aa)) is catalytic. The segment at 566 to 591 (LYLCEFCLKYMKSKNILLRHSKKCGW) adopts a C2HC MYST-type zinc-finger fold. Residues 570–826 (EFCLKYMKSK…EEEREAEKEA (257 aa)) are interaction with BRPF1. Lysine 633 carries the post-translational modification N6-acetyllysine; by autocatalysis. Acetyl-CoA is bound by residues 674–678 (SCIMI) and 683–689 (QRQGFGR). Catalysis depends on glutamate 709, which acts as the Proton donor/acceptor. An acetyl-CoA-binding site is contributed by serine 713. The segment covering 846-860 (SRVSSRQSSAKVQSK) has biased composition (low complexity). Disordered regions lie at residues 846 to 1018 (SRVS…NHFF), 1031 to 1252 (DAEH…FKDA), 1283 to 1358 (MSCN…DDTF), and 1388 to 1418 (DECQQSDHSSPVSSVHSHPGQSVRSVNSPSV). N6-acetyllysine occurs at positions 856, 860, and 862. Serine 866 bears the Phosphoserine mark. The span at 887–909 (SEEEEEEEEEDDEEEEEEEEEES) shows a compositional bias: acidic residues. Over residues 910 to 924 (IQTSPPRLTKPQSVS) the composition is skewed to polar residues. The span at 925-944 (IKRKRPFVVKKKRGRKRRRI) shows a compositional bias: basic residues. Low complexity predominate over residues 946-959 (SSVTTETISETTEV). The segment covering 991–1004 (PVLRKAFPHQPGKK) has biased composition (basic residues). Composition is skewed to basic and acidic residues over residues 1031–1047 (DAEHLKEGSKDNPEPLK) and 1094–1114 (EEQKELSEDKGSPVGMEREVT). Positions 1155–1176 (EEGEEEGEEEGEREEQEEEEEV) are enriched in acidic residues. Residues 1177 to 1207 (TTEKDLDGAKSKENPEPEISMEKEDPVHLGD) are compositionally biased toward basic and acidic residues. Residues 1208–1217 (HEEDEDEEEE) show a composition bias toward acidic residues. Basic and acidic residues-rich tracts occupy residues 1238–1252 (NMERGDLPRETFKDA) and 1310–1320 (QTQKQDQKNSD). Positions 1339–1349 (ETAQAVQSLTQ) are enriched in polar residues. The tract at residues 1359–1872 (PDCAETQEAC…QSLNGSYMRR (514 aa)) is interaction with RUNX1 and RUNX2. Residues 1393-1410 (SDHSSPVSSVHSHPGQSV) are compositionally biased toward low complexity.

It belongs to the MYST (SAS/MOZ) family. As to quaternary structure, component of the MOZ/MORF complex composed at least of ING5, KAT6A, KAT6B, MEAF6 and one of BRPF1, BRD1/BRPF2 and BRPF3. Interacts with RUNX1 and RUNX2. Autoacetylation at Lys-633 is required for proper function. Ubiquitously expressed.

Its subcellular location is the nucleus. The catalysed reaction is L-lysyl-[protein] + acetyl-CoA = N(6)-acetyl-L-lysyl-[protein] + CoA + H(+). Functionally, histone acetyltransferase which may be involved in both positive and negative regulation of transcription. Required for RUNX2-dependent transcriptional activation. Component of the MOZ/MORF complex which has a histone H3 acetyltransferase activity. Involved in cerebral cortex development. This Mus musculus (Mouse) protein is Histone acetyltransferase KAT6B (Kat6b).